The following is a 31-amino-acid chain: Cyclotide mden-J (31 aa).

Positions 1 to 31 form a cross-link, cyclopeptide (Gly-Asn); it reads GSIPCGESCVYIPCISSIVGCACKSKVCYKN. 3 cysteine pairs are disulfide-bonded: Cys-5–Cys-21, Cys-9–Cys-23, and Cys-14–Cys-28.

This sequence belongs to the cyclotide family. Bracelet subfamily. Post-translationally, this is a cyclic peptide.

Functionally, probably participates in a plant defense mechanism. The polypeptide is Cyclotide mden-J (Melicytus dentatus (Tree violet)).